The following is a 312-amino-acid chain: Methionyl-tRNA formyltransferase (312 aa).

Residue 113–116 coordinates (6S)-5,6,7,8-tetrahydrofolate; the sequence is SILP.

This sequence belongs to the Fmt family.

It catalyses the reaction L-methionyl-tRNA(fMet) + (6R)-10-formyltetrahydrofolate = N-formyl-L-methionyl-tRNA(fMet) + (6S)-5,6,7,8-tetrahydrofolate + H(+). Attaches a formyl group to the free amino group of methionyl-tRNA(fMet). The formyl group appears to play a dual role in the initiator identity of N-formylmethionyl-tRNA by promoting its recognition by IF2 and preventing the misappropriation of this tRNA by the elongation apparatus. The sequence is that of Methionyl-tRNA formyltransferase from Hydrogenovibrio crunogenus (strain DSM 25203 / XCL-2) (Thiomicrospira crunogena).